A 468-amino-acid chain; its full sequence is Secreted triacylglycerol lipase LIP7 (468 aa).

Residues 1–21 (MFPRQILVFAALGLCFALVAG) form the signal peptide. A disulfide bridge links C125 with C295. The active-site Nucleophile is S209. Active-site residues include D355 and H389.

It belongs to the AB hydrolase superfamily. Lipase family. Class Lip subfamily.

It is found in the secreted. Its subcellular location is the cell wall. It carries out the reaction a triacylglycerol + H2O = a diacylglycerol + a fatty acid + H(+). The catalysed reaction is a monoacylglycerol + H2O = glycerol + a fatty acid + H(+). It catalyses the reaction a diacylglycerol + H2O = a monoacylglycerol + a fatty acid + H(+). Secreted lipase involved in Dandruff and seborrheic dermatitis (D/SD) probably via lipase-mediated breakdown of sebaceous lipids and release of irritating free fatty acids. Has triacylglycerol lipase activity and is able to hydrolyze triolein. Mostly converts monoolein to di- and triolein, while free fatty acids are only produced in low amounts. This Malassezia globosa (strain ATCC MYA-4612 / CBS 7966) (Dandruff-associated fungus) protein is Secreted triacylglycerol lipase LIP7.